Here is a 418-residue protein sequence, read N- to C-terminus: Tryptophan synthase beta chain (418 aa).

The segment covering 1 to 18 has biased composition (polar residues); that stretch reads MTSTLPKASQPDPSSLQP. The disordered stretch occupies residues 1–28; sequence MTSTLPKASQPDPSSLQPSARPGAHGRF. The residue at position 111 (Lys111) is an N6-(pyridoxal phosphate)lysine.

Belongs to the TrpB family. In terms of assembly, tetramer of two alpha and two beta chains. Pyridoxal 5'-phosphate is required as a cofactor.

The catalysed reaction is (1S,2R)-1-C-(indol-3-yl)glycerol 3-phosphate + L-serine = D-glyceraldehyde 3-phosphate + L-tryptophan + H2O. It functions in the pathway amino-acid biosynthesis; L-tryptophan biosynthesis; L-tryptophan from chorismate: step 5/5. Functionally, the beta subunit is responsible for the synthesis of L-tryptophan from indole and L-serine. The protein is Tryptophan synthase beta chain of Synechococcus sp. (strain CC9902).